Consider the following 2124-residue polypeptide: Genome polyprotein (2124 aa).

Glycine 2 carries N-myristoyl glycine; by host lipidation. The interval 873–880 (VARDLLLI) is host EIF4E binding. An SF3 helicase domain is found at 1102–1264 (VQIATYFRNF…SAATKNGKLD (163 aa)). An ATP-binding site is contributed by 1130–1137 (GKPGVGKS). Over residues 1415-1437 (DKPKEEEEEPEEKKEKKTEESKE) the composition is skewed to basic and acidic residues. The segment at 1415–1446 (DKPKEEEEEPEEKKEKKTEESKEAAGPYNGPT) is disordered. Tyrosine 1442 is subject to O-(5'-phospho-RNA)-tyrosine. Residues 1459–1648 (SPLMDMEKKI…VGTRLTARMI (190 aa)) form the Peptidase C3 domain. Residues histidine 1501, aspartate 1535, and cysteine 1612 each act as for protease 3C activity in the active site. In terms of domain architecture, RdRp catalytic spans 1893 to 2011 (PYLYDFDYSN…ASKFELDLVM (119 aa)). Catalysis depends on for RdRp activity residues aspartate 1899 and aspartate 1997.

The protein belongs to the picornaviruses polyprotein family. As to quaternary structure, interacts with host EIF4E. In terms of assembly, interacts with host IFIH1/MDA5; this interaction inhibits the induction of the IFN-beta signal pathway. Specific enzymatic cleavages by the viral protease in vivo yield a variety of precursors and mature proteins. The polyprotein seems to be cotranslationally cleaved at the 2A/2B junction by a ribosomal skip from one codon to the next without formation of a peptide bond. This process would release the P1-2A peptide from the translational complex. In terms of processing, during virion maturation, immature virions are rendered infectious following cleavage of VP0 into VP4 and VP2. This maturation seems to be an autocatalytic event triggered by the presence of RNA in the capsid and is followed by a conformational change of the particle. Post-translationally, myristoylation is required during RNA encapsidation and formation of the mature virus particle. Uridylylated by the polymerase and is covalently linked to the 5'-end of genomic RNA. This uridylylated form acts as a nucleotide-peptide primer for the polymerase.

Its subcellular location is the virion. It localises to the host cytoplasm. The protein localises to the host nucleus. The protein resides in the host nucleolus. It is found in the host cytoplasmic vesicle membrane. The catalysed reaction is RNA(n) + a ribonucleoside 5'-triphosphate = RNA(n+1) + diphosphate. It catalyses the reaction ATP + H2O = ADP + phosphate + H(+). It carries out the reaction Selective cleavage of Gln-|-Gly bond in the poliovirus polyprotein. In other picornavirus reactions Glu may be substituted for Gln, and Ser or Thr for Gly.. Its function is as follows. Forms an icosahedral capsid of pseudo T=3 symmetry with capsid proteins VP2 and VP3. Together they form an icosahedral capsid composed of 60 copies of each VP1, VP2, and VP3, with a diameter of approximately 300 Angstroms. VP4 lies on the inner surface of the protein shell formed by VP1, VP2 and VP3. All the three latter proteins contain a beta-sheet structure called beta-barrel jelly roll. VP1 is situated at the 12 fivefold axes, whereas VP2 and VP3 are located at the quasi-sixfold axes. Functionally, lies on the inner surface of the capsid shell. After binding to the host receptor, the capsid undergoes conformational changes. Capsid protein VP4 is released, capsid protein VP1 N-terminus is externalized, and together, they shape a pore in the host membrane through which the viral genome is translocated into the host cell cytoplasm. After genome has been released, the channel shrinks. In terms of biological role, VP0 precursor is a component of immature procapsids. Involved in host translation shutoff by inhibiting cap-dependent mRNA translation. Nuclear localization is required for this function. The resulting inhibition of cellular protein synthesis serves to ensure maximal viral gene expression and to evade host immune response. Its function is as follows. Affects membrane integrity and causes an increase in membrane permeability. Functionally, associates with and induces structural rearrangements of intracellular membranes. It displays RNA-binding, nucleotide binding and NTPase activities. Interacts with IFIH1/MDA5 to inhibit the induction of the IFN-beta signal pathway. In terms of biological role, serves as membrane anchor via its hydrophobic domain. Forms a primer, VPg-pU, which is utilized by the polymerase for the initiation of RNA chains. Its function is as follows. Cysteine protease that generates mature viral proteins from the precursor polyprotein. In addition to its proteolytic activity, it binds to viral RNA, and thus influences viral genome replication. RNA and substrate cooperatively bind to the protease. Cleaves host PABP1, this cleavage is important for viral replication. Cleaves host TANK and disrupts the TANK-TBK1-IKKepsilon-IRF3 complex, thereby inhibiting the induction of the IFN-beta signal pathway. Functionally, replicates the genomic and antigenomic RNAs by recognizing replications specific signals. Performs VPg uridylylation. This Cosavirus A (isolate Human/Pakistan/0553/-) (HCoSV-A) protein is Genome polyprotein.